The primary structure comprises 420 residues: Transmembrane protease serine 11B-like protein (420 aa).

Over 1 to 19 (MTVSKLRPVIASRKSFPPW) the chain is Cytoplasmic. Residues 20–40 (MIILGVLGVLAILGLIIGLLV) form a helical; Signal-anchor for type II membrane protein membrane-spanning segment. Topologically, residues 41–420 (HFLAVENKIY…RDWIASKTGI (380 aa)) are extracellular. Residues 48–165 (KIYYYQGSFK…GSLKLTEITK (118 aa)) enclose the SEA domain. 2 N-linked (GlcNAc...) asparagine glycosylation sites follow: asparagine 111 and asparagine 146. The Peptidase S1 domain occupies 189-419 (ITGGSTAQKG…YRDWIASKTG (231 aa)). Cysteine 214 and cysteine 230 are disulfide-bonded. Histidine 229 (charge relay system) is an active-site residue. A glycan (N-linked (GlcNAc...) asparagine) is linked at asparagine 239. Catalysis depends on aspartate 274, which acts as the Charge relay system. Disulfide bonds link cysteine 339-cysteine 355 and cysteine 366-cysteine 395. Serine 370 (charge relay system) is an active-site residue.

This sequence belongs to the peptidase S1 family.

It localises to the membrane. The protein resides in the cell membrane. Its activity is regulated as follows. Inhibited by aprotinin, leupeptin, benzamidine, SERPINA1, SPINT1 and SPINT2. In terms of biological role, serine protease. The polypeptide is Transmembrane protease serine 11B-like protein (Tmprss11bnl) (Rattus norvegicus (Rat)).